Here is a 147-residue protein sequence, read N- to C-terminus: Hemoglobin subunit beta-2 (147 aa).

The region spanning 3–147 is the Globin domain; that stretch reads EWTDEERTII…VVSALGRQYH (145 aa). Residues histidine 64 and histidine 93 each contribute to the heme b site.

The protein belongs to the globin family. In terms of assembly, hb 2 is a heterotetramer of two alpha-2 and two beta-2 chains. Hb 3 is a heterotetramer of two alpha-1 and two beta-2 chains. Red blood cells.

Its function is as follows. Involved in oxygen transport from gills to the various peripheral tissues. The polypeptide is Hemoglobin subunit beta-2 (hbb2) (Gadus morhua (Atlantic cod)).